Consider the following 458-residue polypeptide: Argininosuccinate lyase (458 aa).

The protein belongs to the lyase 1 family. Argininosuccinate lyase subfamily.

Its subcellular location is the cytoplasm. It carries out the reaction 2-(N(omega)-L-arginino)succinate = fumarate + L-arginine. It functions in the pathway amino-acid biosynthesis; L-arginine biosynthesis; L-arginine from L-ornithine and carbamoyl phosphate: step 3/3. The polypeptide is Argininosuccinate lyase (Haemophilus ducreyi (strain 35000HP / ATCC 700724)).